A 344-amino-acid chain; its full sequence is Probable magnesium transporter NIPA9 (344 aa).

The Cytoplasmic segment spans residues 1 to 46 (MWESICLTLAATAGNNIGKVLQKKGTIILPPLSLKLKVLRAYAENK). 2 helical membrane-spanning segments follow: residues 47–67 (PWAL…RALS) and 68–88 (LAPV…LSVF). The Cytoplasmic segment spans residues 89 to 98 (SHFYLKEVMN). The chain crosses the membrane as a helical span at residues 99–119 (VFDWIGITVAGIGTIGVGAGG). Residues 120-125 (EEQEAS) are Extracellular-facing. Residues 126-146 (LISVFQLLWLALVVAILFVLL) form a helical membrane-spanning segment. Topologically, residues 147-166 (NAWLHIFKRQRREQELGEYE) are cytoplasmic. The chain crosses the membrane as a helical span at residues 167 to 187 (VVEEIIYGLESGILFGMASVV). Residues 188–191 (SKMG) are Extracellular-facing. Residues 192–212 (FVFVEQGFSTMFIPMCISISI) traverse the membrane as a helical segment. The Cytoplasmic portion of the chain corresponds to 213-231 (CCSGTGFFYQTRGLKHGRA). Residues 232 to 252 (IVVSTCAAVASIVTGVVAGMF) form a helical membrane-spanning segment. Over 253-265 (ALGEKLPTSPSGR) the chain is Extracellular. A helical transmembrane segment spans residues 266-286 (LLLLLGWLLIMLGVVLLVTSS). Residues 287–344 (RLIRHLPRSFRRSRQTSLERGFNIRRTTSHTPKDTNPSAVIQAATLHHLLSSPSKDKD) are Cytoplasmic-facing.

This sequence belongs to the NIPA (TC 2.A.7) family. In terms of assembly, homodimer.

It is found in the cell membrane. The protein resides in the early endosome. Its function is as follows. Acts as a Mg(2+) transporter. Can also transport other divalent cations such as Fe(2+), Sr(2+), Ba(2+), Mn(2+) and Co(2+) but to a much less extent than Mg(2+). This Arabidopsis thaliana (Mouse-ear cress) protein is Probable magnesium transporter NIPA9.